Reading from the N-terminus, the 413-residue chain is Tryptophan synthase beta chain (413 aa).

Residue Lys-107 is modified to N6-(pyridoxal phosphate)lysine.

It belongs to the TrpB family. In terms of assembly, tetramer of two alpha and two beta chains. Requires pyridoxal 5'-phosphate as cofactor.

It carries out the reaction (1S,2R)-1-C-(indol-3-yl)glycerol 3-phosphate + L-serine = D-glyceraldehyde 3-phosphate + L-tryptophan + H2O. Its pathway is amino-acid biosynthesis; L-tryptophan biosynthesis; L-tryptophan from chorismate: step 5/5. The beta subunit is responsible for the synthesis of L-tryptophan from indole and L-serine. The chain is Tryptophan synthase beta chain from Trichormus variabilis (strain ATCC 29413 / PCC 7937) (Anabaena variabilis).